A 530-amino-acid chain; its full sequence is UPF0422 protein lpg2959 (530 aa).

A signal peptide spans 1–19; it reads MKFKKIILALACLSSPLYA. Positions 20 to 66 form a coiled coil; sequence DQDQQLKSEIQRLQHQAEDLQAQLNRLQKQLANHKSSQQKHEQQAAA. Residues 50 to 81 form a disordered region; sequence LANHKSSQQKHEQQAAAKPAEPQSKPTVKSGA. Positions 63 to 75 are enriched in low complexity; that stretch reads QAAAKPAEPQSKP.

This sequence belongs to the UPF0422 family.

The chain is UPF0422 protein lpg2959 from Legionella pneumophila subsp. pneumophila (strain Philadelphia 1 / ATCC 33152 / DSM 7513).